A 143-amino-acid polypeptide reads, in one-letter code: Transcriptional regulator MraZ (143 aa).

2 SpoVT-AbrB domains span residues glutamate 5–glutamate 47 and alanine 76–arginine 119.

The protein belongs to the MraZ family. Forms oligomers.

It localises to the cytoplasm. Its subcellular location is the nucleoid. This is Transcriptional regulator MraZ from Limosilactobacillus fermentum (strain NBRC 3956 / LMG 18251) (Lactobacillus fermentum).